Consider the following 261-residue polypeptide: High-affinity zinc uptake system membrane protein ZnuB (261 aa).

7 helical membrane-spanning segments follow: residues 5 to 27 (FFFG…LFII), 48 to 70 (FAVL…FGML), 85 to 107 (ILGI…ISNF), 128 to 150 (IVIL…DLML), 172 to 194 (ILIF…LIAI), 215 to 234 (AFFS…LMSV), and 238 to 257 (LAIS…ISNL).

It belongs to the ABC-3 integral membrane protein family.

The protein resides in the cell membrane. Involved in the high-affinity zinc uptake transport system. This chain is High-affinity zinc uptake system membrane protein ZnuB (znuB), found in Buchnera aphidicola subsp. Baizongia pistaciae (strain Bp).